A 377-amino-acid polypeptide reads, in one-letter code: Caspase-4 (377 aa).

The tract at residues M1 to D59 is required for LPS-binding. The propeptide occupies M1 to D80. A CARD domain is found at M1–N91. N-acetylalanine is present on A2. At S83 the chain carries Phosphoserine. The segment at P84–D104 is disordered. Residues H210 and C258 contribute to the active site. Residues S271–D289 constitute a propeptide that is removed on maturation. R314 bears the (Microbial infection) ADP-riboxanated arginine mark.

It belongs to the peptidase C14A family. Heterotetramer that consists of two anti-parallel arranged heterodimers, each one formed by a 20 kDa (Caspase-4 subunit p20) and a 10 kDa (Caspase-4 subunit p10) subunit. Upon direct LPS-binding, forms large homooligomers, resulting in its activation. These oligomers are often referred to as 'non-canonical inflammasomes'. In its precursor form, interacts with TMEM214; this interaction is required for association with the endoplasmic reticulum membrane. Interacts with CASP1. Interacts with NOD2. Interacts with SERPINB1; this interaction regulates CASP4 activity. As to quaternary structure, heterotetramer that consists of two anti-parallel arranged heterodimers, each one formed by a 20 kDa (Caspase-4 subunit p20) and a 10 kDa (Caspase-4 subunit p10) subunit. In terms of assembly, (Microbial infection) Interacts with NleF protein from pathogenic E.coli; this interaction leads to enzyme inhibition. (Microbial infection) Interacts with cathepsin CTSG; the interaction is promoted by the Td92 surface protein of the periodontal pathogen T.denticola and leads to CASP4 activation. Post-translationally, in response to activation signals, undergoes autoproteolytic cleavage and activation. (Microbial infection) ADP-riboxanation by S.flexneri OspC3 blocks CASP4 autoprocessing, preventing CASP4 activation and ability to recognize and cleave GSDMD, thereby thwarting the inflammasome/pyroptosis-mediated defense. In terms of tissue distribution, widely expressed, including in keratinocytes and colonic and small intestinal epithelial cells (at protein level). Not detected in brain.

Its subcellular location is the cytoplasm. The protein localises to the cytosol. The protein resides in the endoplasmic reticulum membrane. It localises to the mitochondrion. It is found in the inflammasome. Its subcellular location is the secreted. It carries out the reaction Strict requirement for Asp at the P1 position. It has a preferred cleavage sequence of Tyr-Val-Ala-Asp-|- but also cleaves at Asp-Glu-Val-Asp-|-.. Its activity is regulated as follows. Activated by homooligomerization induced by direct binding to cytosolic LPS, in a TLR4-independent manner. In addition to LPS, CASP4/CASP11 may also be activated by oxidized phospholipid 1-palmitoyl-2-arachidonoyl- sn-glycero-3-phosphorylcholine, an oxidized phospholipid (oxPAPC), in dendritic cells, promoting adaptive immunity. The role of oxPAPC is however unclear and another report suggests that oxPAPC competes with LPS-binding and inhibits the non-canonical inflammasome in macrophages. Inflammatory caspase that acts as the effector of the non-canonical inflammasome by mediating lipopolysaccharide (LPS)-induced pyroptosis. Also indirectly activates the NLRP3 and NLRP6 inflammasomes. Acts as a thiol protease that cleaves a tetrapeptide after an Asp residue at position P1: catalyzes cleavage of CGAS, GSDMD and IL18. Effector of the non-canonical inflammasome independently of NLRP3 inflammasome and CASP1: the non-canonical inflammasome promotes pyroptosis through GSDMD cleavage without involving secretion of cytokine IL1B. In the non-canonical inflammasome, CASP4 is activated by direct binding to the lipid A moiety of LPS without the need of an upstream sensor. LPS-binding promotes CASP4 activation and CASP4-mediated cleavage of GSDMD and IL18, followed by IL18 secretion through the GSDMD pore, pyroptosis of infected cells and their extrusion into the gut lumen. Also indirectly promotes secretion of mature cytokines (IL1A and HMGB1) downstream of GSDMD-mediated pyroptosis via activation of the NLRP3 and NLRP6 inflammasomes. Involved in NLRP3-dependent CASP1 activation and IL1B secretion in response to non-canonical activators, such as UVB radiation or cholera enterotoxin. Involved in NLRP6 inflammasome-dependent activation in response to lipoteichoic acid (LTA), a cell-wall component of Gram-positive bacteria, which leads to CASP1 activation and IL1B secretion. Involved in LPS-induced IL6 secretion; this activity may not require caspase enzymatic activity. The non-canonical inflammasome is required for innate immunity to cytosolic, but not vacuolar, bacteria. Plays a crucial role in the restriction of S.typhimurium replication in colonic epithelial cells during infection. Activation of the non-canonical inflammasome in brain endothelial cells can lead to excessive pyroptosis, leading to blood-brain barrier breakdown. Pyroptosis limits bacterial replication, while cytokine secretion promotes the recruitment and activation of immune cells and triggers mucosal inflammation. May also act as an activator of adaptive immunity in dendritic cells, following activation by oxidized phospholipid 1-palmitoyl-2-arachidonoyl- sn-glycero-3-phosphorylcholine, an oxidized phospholipid (oxPAPC). Involved in cell death induced by endoplasmic reticulum stress and by treatment with cytotoxic APP peptides found in Alzheimer's patient brains. Cleavage of GSDMD is not strictly dependent on the consensus cleavage site but depends on an exosite interface on CASP4 that recognizes and binds the Gasdermin-D, C-terminal (GSDMD-CT) part. Catalyzes cleavage and maturation of IL18; IL18 processing also depends of the exosite interface on CASP4. In contrast, it does not directly process IL1B. During non-canonical inflammasome activation, cuts CGAS and may play a role in the regulation of antiviral innate immune activation. In terms of biological role, (Microbial infection) In response to the Td92 surface protein of the periodontal pathogen T.denticola, activated by cathepsin CTSG which leads to production and secretion of IL1A and pyroptosis of gingival fibroblasts. This Homo sapiens (Human) protein is Caspase-4.